Consider the following 1576-residue polypeptide: Spermatogenesis-associated protein 31D1 (1576 aa).

The chain crosses the membrane as a helical span at residues 29–49 (FICLSGLGLFILYLFYVVLTL). 5 disordered regions span residues 170-197 (FTLASTPSATPPEDLILSPRPKASPPPP), 542-572 (HESPVLPPPQPLSLPSTQPLPLPQTLPQGQS), 782-801 (KDHLLHGPETSSDKDLRSNS), 952-1033 (SQGD…TDFQ), and 1293-1347 (RVSP…PPPE). Positions 546–565 (VLPPPQPLSLPSTQPLPLPQ) are enriched in pro residues. Residues 966-980 (RSTFQGEKLGTTSSV) show a composition bias toward polar residues. A compositionally biased stretch (basic and acidic residues) spans 1004 to 1019 (QFSDTDHDLIETDSKD). Polar residues predominate over residues 1020 to 1032 (GASTSLRRGTTDF).

This sequence belongs to the SPATA31 family.

The protein resides in the membrane. Its function is as follows. May play a role in spermatogenesis. This is Spermatogenesis-associated protein 31D1 (SPATA31D1) from Homo sapiens (Human).